A 167-amino-acid chain; its full sequence is Ubiquitin-fold modifier-conjugating enzyme 1 (167 aa).

C116 acts as the Glycyl thioester intermediate in catalysis. K122 is covalently cross-linked (Glycyl lysine isopeptide (Lys-Gly) (interchain with G-Cter in UFM1)).

The protein belongs to the ubiquitin-conjugating enzyme family. UFC1 subfamily. In terms of assembly, interacts with UBA5 (via C-terminus). Interacts with UFL1. Interacts with UFM1. Interacts with KIRREL3. Post-translationally, ufmylated at Lys-122. Deufmylated by UFSP1.

Its function is as follows. E2-like enzyme which specifically catalyzes the second step in ufmylation. Accepts the ubiquitin-like modifier UFM1 from the E1 enzyme UBA5 and forms an intermediate with UFM1 via a thioester linkage. Ufmylation is involved in various processes, such as ribosome recycling, response to DNA damage, interferon response or reticulophagy (also called ER-phagy). The chain is Ubiquitin-fold modifier-conjugating enzyme 1 from Mus musculus (Mouse).